A 1004-amino-acid chain; its full sequence is Glycine dehydrogenase (decarboxylating), mitochondrial (1004 aa).

Lysine 738 is modified (N6-(pyridoxal phosphate)lysine).

The protein belongs to the GcvP family. Homodimer. Interacts with GCSH. The glycine cleavage system is composed of four proteins: P (GLDC), T (GCST), L (DLD) and H (GCSH). Pyridoxal 5'-phosphate is required as a cofactor. In terms of tissue distribution, liver (at protein level).

The protein resides in the mitochondrion. It carries out the reaction N(6)-[(R)-lipoyl]-L-lysyl-[glycine-cleavage complex H protein] + glycine + H(+) = N(6)-[(R)-S(8)-aminomethyldihydrolipoyl]-L-lysyl-[glycine-cleavage complex H protein] + CO2. Its activity is regulated as follows. Stimulated by lipoic acid. Inhibited in presence of methylamine. The glycine cleavage system catalyzes the degradation of glycine. The P protein (GLDC) binds the alpha-amino group of glycine through its pyridoxal phosphate cofactor; CO(2) is released and the remaining methylamine moiety is then transferred to the lipoamide cofactor of the H protein (GCSH). This chain is Glycine dehydrogenase (decarboxylating), mitochondrial, found in Gallus gallus (Chicken).